The primary structure comprises 147 residues: Putative pre-16S rRNA nuclease (147 aa).

This sequence belongs to the YqgF nuclease family.

It localises to the cytoplasm. Its function is as follows. Could be a nuclease involved in processing of the 5'-end of pre-16S rRNA. In Latilactobacillus sakei subsp. sakei (strain 23K) (Lactobacillus sakei subsp. sakei), this protein is Putative pre-16S rRNA nuclease.